A 455-amino-acid polypeptide reads, in one-letter code: DNA repair protein RadA (455 aa).

The C4-type zinc finger occupies 11–28; sequence CVGCGYVHPKWLGRCPEC. 97–104 serves as a coordination point for ATP; that stretch reads GEPGIGKS. The RadA KNRFG motif motif lies at 250-254; sequence KNRFG. A lon-protease-like region spans residues 350–455; it reads DIYVNVAGGI…IAEIFSKAKA (106 aa).

It belongs to the RecA family. RadA subfamily.

Its function is as follows. DNA-dependent ATPase involved in processing of recombination intermediates, plays a role in repairing DNA breaks. Stimulates the branch migration of RecA-mediated strand transfer reactions, allowing the 3' invading strand to extend heteroduplex DNA faster. Binds ssDNA in the presence of ADP but not other nucleotides, has ATPase activity that is stimulated by ssDNA and various branched DNA structures, but inhibited by SSB. Does not have RecA's homology-searching function. This Treponema pallidum (strain Nichols) protein is DNA repair protein RadA.